The following is a 67-amino-acid chain: MARITVEDCLKQIPNRFELALAATYRARQLAQGHTPKIESRDKPTVVALREIASGHVGVEMLKKVPV.

It belongs to the RNA polymerase subunit omega family. As to quaternary structure, the RNAP catalytic core consists of 2 alpha, 1 beta, 1 beta' and 1 omega subunit. When a sigma factor is associated with the core the holoenzyme is formed, which can initiate transcription.

It catalyses the reaction RNA(n) + a ribonucleoside 5'-triphosphate = RNA(n+1) + diphosphate. Functionally, promotes RNA polymerase assembly. Latches the N- and C-terminal regions of the beta' subunit thereby facilitating its interaction with the beta and alpha subunits. The chain is DNA-directed RNA polymerase subunit omega from Burkholderia ambifaria (strain MC40-6).